We begin with the raw amino-acid sequence, 175 residues long: Large ribosomal subunit protein uL10 (175 aa).

The protein belongs to the universal ribosomal protein uL10 family. As to quaternary structure, part of the ribosomal stalk of the 50S ribosomal subunit. The N-terminus interacts with L11 and the large rRNA to form the base of the stalk. The C-terminus forms an elongated spine to which L12 dimers bind in a sequential fashion forming a multimeric L10(L12)X complex.

Forms part of the ribosomal stalk, playing a central role in the interaction of the ribosome with GTP-bound translation factors. The protein is Large ribosomal subunit protein uL10 of Methylobacterium sp. (strain 4-46).